Here is a 538-residue protein sequence, read N- to C-terminus: Pentachlorophenol 4-monooxygenase (538 aa).

FAD is bound by residues 16 to 45 (AVLI…MIDR) and 288 to 298 (YRKGNVFLAGD).

The protein belongs to the PheA/TfdB FAD monooxygenase family. Homodimer. FAD is required as a cofactor.

The catalysed reaction is pentachlorophenol + NADPH + O2 + H(+) = 2,3,5,6-tetrachloro-1,4-benzoquinone + chloride + NADP(+) + H2O. It carries out the reaction 2,3,5,6-tetrachlorophenol + NADPH + O2 = 2,3,5,6-tetrachlorohydroquinone + NADP(+) + H2O. Its pathway is xenobiotic degradation; pentachlorophenol degradation. Functionally, dechlorination of pentachlorophenol to tetrachlorobenzoquinone. Also removes hydrogen and nitro, amino, and cyano groups from benzene ring at the para position in relation to the hydroxyl of phenol. This chain is Pentachlorophenol 4-monooxygenase (pcpB), found in Sphingobium chlorophenolicum.